A 295-amino-acid polypeptide reads, in one-letter code: Phosphatidylserine decarboxylase proenzyme (295 aa).

Residues Asp90 and Ser258 each act as charge relay system; for autoendoproteolytic cleavage activity in the active site. Residue Ser258 is the Schiff-base intermediate with substrate; via pyruvic acid; for decarboxylase activity of the active site. A Pyruvic acid (Ser); by autocatalysis modification is found at Ser258.

It belongs to the phosphatidylserine decarboxylase family. PSD-B subfamily. Prokaryotic type I sub-subfamily. As to quaternary structure, heterodimer of a large membrane-associated beta subunit and a small pyruvoyl-containing alpha subunit. The cofactor is pyruvate. In terms of processing, is synthesized initially as an inactive proenzyme. Formation of the active enzyme involves a self-maturation process in which the active site pyruvoyl group is generated from an internal serine residue via an autocatalytic post-translational modification. Two non-identical subunits are generated from the proenzyme in this reaction, and the pyruvate is formed at the N-terminus of the alpha chain, which is derived from the carboxyl end of the proenzyme. The autoendoproteolytic cleavage occurs by a canonical serine protease mechanism, in which the side chain hydroxyl group of the serine supplies its oxygen atom to form the C-terminus of the beta chain, while the remainder of the serine residue undergoes an oxidative deamination to produce ammonia and the pyruvoyl prosthetic group on the alpha chain. During this reaction, the Ser that is part of the protease active site of the proenzyme becomes the pyruvoyl prosthetic group, which constitutes an essential element of the active site of the mature decarboxylase.

The protein localises to the cell membrane. It carries out the reaction a 1,2-diacyl-sn-glycero-3-phospho-L-serine + H(+) = a 1,2-diacyl-sn-glycero-3-phosphoethanolamine + CO2. The protein operates within phospholipid metabolism; phosphatidylethanolamine biosynthesis; phosphatidylethanolamine from CDP-diacylglycerol: step 2/2. Its function is as follows. Catalyzes the formation of phosphatidylethanolamine (PtdEtn) from phosphatidylserine (PtdSer). In Blochmanniella pennsylvanica (strain BPEN), this protein is Phosphatidylserine decarboxylase proenzyme.